Consider the following 206-residue polypeptide: Ribosomal RNA large subunit methyltransferase E (206 aa).

S-adenosyl-L-methionine contacts are provided by G54, W56, D76, D94, and D118. K158 acts as the Proton acceptor in catalysis.

The protein belongs to the class I-like SAM-binding methyltransferase superfamily. RNA methyltransferase RlmE family.

The protein resides in the cytoplasm. The enzyme catalyses uridine(2552) in 23S rRNA + S-adenosyl-L-methionine = 2'-O-methyluridine(2552) in 23S rRNA + S-adenosyl-L-homocysteine + H(+). Specifically methylates the uridine in position 2552 of 23S rRNA at the 2'-O position of the ribose in the fully assembled 50S ribosomal subunit. This Methanosphaera stadtmanae (strain ATCC 43021 / DSM 3091 / JCM 11832 / MCB-3) protein is Ribosomal RNA large subunit methyltransferase E.